The following is a 501-amino-acid chain: Amidophosphoribosyltransferase (501 aa).

The Nucleophile role is filled by cysteine 2. In terms of domain architecture, Glutamine amidotransferase type-2 spans 2–234; that stretch reads CGIVGIVGKS…PGEAVYITEE (233 aa). Residues threonine 303, aspartate 365, and aspartate 366 each coordinate Mg(2+).

In the C-terminal section; belongs to the purine/pyrimidine phosphoribosyltransferase family. It depends on Mg(2+) as a cofactor.

The enzyme catalyses 5-phospho-beta-D-ribosylamine + L-glutamate + diphosphate = 5-phospho-alpha-D-ribose 1-diphosphate + L-glutamine + H2O. It participates in purine metabolism; IMP biosynthesis via de novo pathway; N(1)-(5-phospho-D-ribosyl)glycinamide from 5-phospho-alpha-D-ribose 1-diphosphate: step 1/2. In terms of biological role, catalyzes the formation of phosphoribosylamine from phosphoribosylpyrophosphate (PRPP) and glutamine. The protein is Amidophosphoribosyltransferase of Pseudomonas aeruginosa (strain ATCC 15692 / DSM 22644 / CIP 104116 / JCM 14847 / LMG 12228 / 1C / PRS 101 / PAO1).